The primary structure comprises 546 residues: CTP synthase (546 aa).

The tract at residues 1 to 266 (MTTNYIFVTG…DELVCKRFGI (266 aa)) is amidoligase domain. Residue Ser14 participates in CTP binding. A UTP-binding site is contributed by Ser14. Residues 15-20 (SLGKGI) and Asp72 contribute to the ATP site. Residues Asp72 and Glu140 each contribute to the Mg(2+) site. CTP-binding positions include 147-149 (DIE), 187-192 (KTKPTQ), and Lys223. UTP is bound by residues 187–192 (KTKPTQ) and Lys223. Residue 239 to 241 (RDV) coordinates ATP. The Glutamine amidotransferase type-1 domain occupies 291-542 (TIGMVGKYIE…VKAAGEFQRG (252 aa)). Position 352 (Gly352) interacts with L-glutamine. The active-site Nucleophile; for glutamine hydrolysis is the Cys379. Residues 380–383 (LGMQ), Glu403, and Arg470 contribute to the L-glutamine site. Catalysis depends on residues His515 and Glu517.

This sequence belongs to the CTP synthase family. As to quaternary structure, homotetramer.

It carries out the reaction UTP + L-glutamine + ATP + H2O = CTP + L-glutamate + ADP + phosphate + 2 H(+). The enzyme catalyses L-glutamine + H2O = L-glutamate + NH4(+). The catalysed reaction is UTP + NH4(+) + ATP = CTP + ADP + phosphate + 2 H(+). The protein operates within pyrimidine metabolism; CTP biosynthesis via de novo pathway; CTP from UDP: step 2/2. Its activity is regulated as follows. Allosterically activated by GTP, when glutamine is the substrate; GTP has no effect on the reaction when ammonia is the substrate. The allosteric effector GTP functions by stabilizing the protein conformation that binds the tetrahedral intermediate(s) formed during glutamine hydrolysis. Inhibited by the product CTP, via allosteric rather than competitive inhibition. Its function is as follows. Catalyzes the ATP-dependent amination of UTP to CTP with either L-glutamine or ammonia as the source of nitrogen. Regulates intracellular CTP levels through interactions with the four ribonucleotide triphosphates. This is CTP synthase from Vibrio atlanticus (strain LGP32) (Vibrio splendidus (strain Mel32)).